A 359-amino-acid chain; its full sequence is Olfactory receptor 8S1 (359 aa).

The Extracellular portion of the chain corresponds to methionine 1–alanine 25. Asparagine 5 is a glycosylation site (N-linked (GlcNAc...) asparagine). Residues leucine 26 to leucine 46 traverse the membrane as a helical segment. At leucine 47–cysteine 54 the chain is on the cytoplasmic side. The helical transmembrane segment at leucine 55–serine 75 threads the bilayer. Over valine 76–alanine 99 the chain is Extracellular. Cysteines 97 and 189 form a disulfide. The helical transmembrane segment at glutamine 100–tyrosine 120 threads the bilayer. Residues aspartate 121–glutamine 139 lie on the Cytoplasmic side of the membrane. The chain crosses the membrane as a helical span at residues leucine 140–valine 160. Topologically, residues leucine 161–isoleucine 197 are extracellular. Residues alanine 198–serine 217 traverse the membrane as a helical segment. Topologically, residues tyrosine 218–alanine 237 are cytoplasmic. The helical transmembrane segment at phenylalanine 238–arginine 258 threads the bilayer. The Extracellular segment spans residues histidine 259–glutamate 269. The chain crosses the membrane as a helical span at residues leucine 270–leucine 290. At lysine 291–proline 359 the chain is on the cytoplasmic side. The tract at residues leucine 301–valine 338 is disordered.

It belongs to the G-protein coupled receptor 1 family.

The protein localises to the cell membrane. In terms of biological role, odorant receptor. The polypeptide is Olfactory receptor 8S1 (OR8S1) (Homo sapiens (Human)).